Consider the following 262-residue polypeptide: Tethering factor for nuclear proteasome cut8 (262 aa).

This sequence belongs to the cut8/STS1 family. Binds the proteasome. Post-translationally, the N-terminal part (residues 1 to 72) is polyubiquitinated by rhp6, which is required for the interaction with the proteasome.

The protein localises to the nucleus envelope. Functionally, together with nucleoporin alm1, tethers the proteasome to the nuclear envelope. Involved in ubiquitin-mediated protein degradation and facilitates the degradation of nuclear proteins like mitotic cyclin and cut2. Required for normal progression of anaphase. The sequence is that of Tethering factor for nuclear proteasome cut8 from Schizosaccharomyces pombe (strain 972 / ATCC 24843) (Fission yeast).